The primary structure comprises 182 residues: Ribosome-recycling factor (182 aa).

This sequence belongs to the RRF family.

The protein localises to the cytoplasm. In terms of biological role, responsible for the release of ribosomes from messenger RNA at the termination of protein biosynthesis. May increase the efficiency of translation by recycling ribosomes from one round of translation to another. The sequence is that of Ribosome-recycling factor from Picosynechococcus sp. (strain ATCC 27264 / PCC 7002 / PR-6) (Agmenellum quadruplicatum).